A 357-amino-acid chain; its full sequence is MSIVIQNVSKSFGSFQALADINLSIETGELVALLGPSGSGKTSLLRIIAGLEAADQGDIYFHKDKVTQTHAASRQVGFVFQHYALFPHMTVADNISYGLRVKPRKERPSKKEIAEKVRELLALVKLEGMDDRYPAQLSGGQRQRIALARALAVEPKVLLLDEPFGALDAKVRKDLRKWLRKLHNEFQVTSVFVTHDQEEALDVSDRVVVMNQGKIEQVGSPDEVYEQPKSPFVYDFLGNVNVFTGRVKQGFVQLDKHQLKTPTISKDIHDQEAVVYTRPHHMEISRKKQKDAIPAVIEHIHMVGPIAFLELNWKDDEEVLQVELAKDRFHELDLKKGETVFVVPKNLTLFFPEEFTI.

The region spanning Ile3 to Leu237 is the ABC transporter domain. Position 35–42 (Gly35–Thr42) interacts with ATP.

This sequence belongs to the ABC transporter superfamily. Sulfate/tungstate importer (TC 3.A.1.6) family. The complex is composed of two ATP-binding proteins (CysA), two transmembrane proteins (CysT and CysW) and a solute-binding protein (CysP).

The protein resides in the cell membrane. It catalyses the reaction sulfate(out) + ATP + H2O = sulfate(in) + ADP + phosphate + H(+). It carries out the reaction thiosulfate(out) + ATP + H2O = thiosulfate(in) + ADP + phosphate + H(+). Functionally, part of the ABC transporter complex CysAWTP involved in sulfate/thiosulfate import. Responsible for energy coupling to the transport system. The chain is Sulfate/thiosulfate import ATP-binding protein CysA from Halalkalibacterium halodurans (strain ATCC BAA-125 / DSM 18197 / FERM 7344 / JCM 9153 / C-125) (Bacillus halodurans).